Consider the following 486-residue polypeptide: Cardiolipin synthase A (486 aa).

The next 2 membrane-spanning stretches (helical) occupy residues 3–23 and 38–58; these read TVYT…IAGV and MAWL…YLAV. PLD phosphodiesterase domains follow at residues 219–246 and 399–426; these read MDLR…VDPR and EGGL…DMRS. Active-site residues include His-224, Lys-226, Asp-231, His-404, Lys-406, and Asp-411.

Belongs to the phospholipase D family. Cardiolipin synthase subfamily. ClsA sub-subfamily.

It is found in the cell inner membrane. The enzyme catalyses 2 a 1,2-diacyl-sn-glycero-3-phospho-(1'-sn-glycerol) = a cardiolipin + glycerol. In terms of biological role, catalyzes the reversible phosphatidyl group transfer from one phosphatidylglycerol molecule to another to form cardiolipin (CL) (diphosphatidylglycerol) and glycerol. This Shigella boydii serotype 4 (strain Sb227) protein is Cardiolipin synthase A.